Consider the following 197-residue polypeptide: Imidazoleglycerol-phosphate dehydratase (197 aa).

The protein belongs to the imidazoleglycerol-phosphate dehydratase family.

It is found in the cytoplasm. The catalysed reaction is D-erythro-1-(imidazol-4-yl)glycerol 3-phosphate = 3-(imidazol-4-yl)-2-oxopropyl phosphate + H2O. Its pathway is amino-acid biosynthesis; L-histidine biosynthesis; L-histidine from 5-phospho-alpha-D-ribose 1-diphosphate: step 6/9. The chain is Imidazoleglycerol-phosphate dehydratase from Azorhizobium caulinodans (strain ATCC 43989 / DSM 5975 / JCM 20966 / LMG 6465 / NBRC 14845 / NCIMB 13405 / ORS 571).